The chain runs to 330 residues: Glucosyltransferase 3 (330 aa).

Thr-16 provides a ligand contact to UDP. Residues 106–111 (MFSGNF) form a substrate protein-binding loop region. UDP-binding positions include Arg-179, 211–214 (YRPD), and 244–249 (SYKLGS).

The protein belongs to the Gtf3 glucosyltransferase family. Homotetramer; a dimer of dimers. In vitro glycosyltransferase activity is metal-independent. serves as cofactor.

It functions in the pathway protein modification; protein glycosylation. In terms of biological role, required for polymorphic O-glycosylation of the serine-rich repeat protein Fap1. Catalyzes the second step in glycosylation of the serine-rich repeat protein in this bacteria. Transfers glucose from UDP-glucose to the terminal GlcNAc moiety of 3-O-(N-acetyl-alpha-D-glucosaminyl)-L-seryl-[protein] which results from the first glycosylation step of Fap1; does not use other sugar nucleotides as substrates. The polypeptide is Glucosyltransferase 3 (Streptococcus parasanguinis).